The chain runs to 464 residues: 26S proteasome regulatory subunit 7 homolog B (464 aa).

246-253 (GPPGSGKT) is an ATP binding site. Residue Lys-452 forms a Glycyl lysine isopeptide (Lys-Gly) (interchain with G-Cter in ubiquitin) linkage.

The protein belongs to the AAA ATPase family. Component of the 19S regulatory particle (RP/PA700) base subcomplex of the 26S proteasome. The 26S proteasome is composed of a core protease (CP), known as the 20S proteasome, capped at one or both ends by the 19S regulatory particle (RP/PA700). The RP/PA700 complex is composed of at least 17 different subunits in two subcomplexes, the base and the lid, which form the portions proximal and distal to the 20S proteolytic core, respectively.

It localises to the cytoplasm. The protein resides in the nucleus. The 26S proteasome is involved in the ATP-dependent degradation of ubiquitinated proteins. The regulatory (or ATPase) complex confers ATP dependency and substrate specificity to the 26S complex. The sequence is that of 26S proteasome regulatory subunit 7 homolog B (RPT1B) from Arabidopsis thaliana (Mouse-ear cress).